A 92-amino-acid polypeptide reads, in one-letter code: Small ribosomal subunit protein uS19c (92 aa).

This sequence belongs to the universal ribosomal protein uS19 family.

The protein localises to the plastid. Its subcellular location is the chloroplast. In terms of biological role, protein S19 forms a complex with S13 that binds strongly to the 16S ribosomal RNA. The sequence is that of Small ribosomal subunit protein uS19c (rps19) from Anthoceros angustus (Hornwort).